The sequence spans 386 residues: Phosphatidyl-myo-inositol mannosyltransferase (386 aa).

Residues tyrosine 9 and glycine 16 each contribute to the GDP-alpha-D-mannose site. Residues glutamine 18, 62–63 (YN), and arginine 68 each bind a 1,2-diacyl-sn-glycero-3-phospho-(1D-myo-inositol). Residues arginine 196, 201 to 202 (RK), 251 to 253 (VDD), lysine 256, 274 to 278 (ESFGI), and glutamate 282 each bind GDP-alpha-D-mannose.

It belongs to the glycosyltransferase group 1 family. Glycosyltransferase 4 subfamily. In terms of assembly, monomer. The cofactor is Mg(2+).

It is found in the cell membrane. It catalyses the reaction a 1,2-diacyl-sn-glycero-3-phospho-(1D-myo-inositol) + GDP-alpha-D-mannose = a 1,2-diacyl-sn-glycero-3-phospho-[alpha-D-mannopyranosyl-(1&lt;-&gt;6)-D-myo-inositol] + GDP + H(+). Its pathway is phospholipid metabolism; phosphatidylinositol metabolism. Functionally, involved in the biosynthesis of phosphatidyl-myo-inositol mannosides (PIM) which are early precursors in the biosynthesis of lipomannans (LM) and lipoarabinomannans (LAM). Catalyzes the addition of a mannosyl residue from GDP-D-mannose (GDP-Man) to the position 2 of the carrier lipid phosphatidyl-myo-inositol (PI) to generate a phosphatidyl-myo-inositol bearing an alpha-1,2-linked mannose residue (PIM1). In contrary to PimB, the mannosyltransferase PimA is unable to transfer a mannose residue to the position 6 of the phosphatidyl-myo-inositol of PIM1. This is Phosphatidyl-myo-inositol mannosyltransferase from Mycolicibacterium smegmatis (strain ATCC 700084 / mc(2)155) (Mycobacterium smegmatis).